We begin with the raw amino-acid sequence, 270 residues long: Myelin protein zero-like protein 1 (270 aa).

Residues 1-35 (MAEAVGAVTLIAAPARRRWLWSALAAMLGLLTARI) form the signal peptide. An Ig-like V-type domain is found at 36–151 (SALEVHTPKE…DIVVRPGQIR (116 aa)). Over 36–162 (SALEVHTPKE…HVVEIDNLLV (127 aa)) the chain is Extracellular. N-linked (GlcNAc...) asparagine glycans are attached at residues Asn50 and Asn130. A disulfide bond links Cys58 and Cys135. A helical membrane pass occupies residues 163-183 (FLVWVVVGTVTAVVLGLTLLI). At 184 to 270 (SLVLVVLYRR…SVVYADIRKD (87 aa)) the chain is on the cytoplasmic side. Residues 201–257 (TGCSTSERLSPVKQAPRKCPSDTEGLVKSPPSAGSHQGPVIYAQLDHSGGHHSGKIN) form a disordered region. 4 positions are modified to phosphoserine: Ser204, Ser206, Ser210, and Ser221. The short motif at 240 to 245 (VIYAQL) is the ITIM motif 1 element. A Phosphotyrosine modification is found at Tyr242. Ser261 is subject to Phosphoserine. The short motif at 262–267 (VVYADI) is the ITIM motif 2 element. Phosphotyrosine is present on Tyr264.

This sequence belongs to the myelin P0 protein family. In terms of assembly, interacts with phosphorylated PTPN11/SHP-2. Phosphorylated on tyrosine residues upon stimulation with pervanadate and concanavalin-A (ConA). Phosphorylation at Tyr-242 and Tyr-264 is required for interaction with PTPN11/SHP-2. Dephosphorylated by PTPN11/SHP-2 (in vitro). In terms of processing, N-glycosylated.

It is found in the membrane. Its function is as follows. Cell surface receptor, which is involved in signal transduction processes. Recruits PTPN11/SHP-2 to the cell membrane and is a putative substrate of PTPN11/SHP-2. Is a major receptor for concanavalin-A (ConA) and is involved in cellular signaling induced by ConA, which probably includes Src family tyrosine-protein kinases. May be involved in regulation of integrin-mediated cell motility. The chain is Myelin protein zero-like protein 1 (Mpzl1) from Rattus norvegicus (Rat).